A 489-amino-acid chain; its full sequence is 3-octaprenyl-4-hydroxybenzoate carboxy-lyase (489 aa).

A Mn(2+)-binding site is contributed by N172. Prenylated FMN-binding positions include I175–R177, R189–L191, and R194–G195. Residue E238 participates in Mn(2+) binding. D287 functions as the Proton donor in the catalytic mechanism.

Belongs to the UbiD family. In terms of assembly, homohexamer. The cofactor is prenylated FMN. Mn(2+) serves as cofactor.

The protein resides in the cell membrane. The catalysed reaction is a 4-hydroxy-3-(all-trans-polyprenyl)benzoate + H(+) = a 2-(all-trans-polyprenyl)phenol + CO2. The protein operates within cofactor biosynthesis; ubiquinone biosynthesis. Its function is as follows. Catalyzes the decarboxylation of 3-octaprenyl-4-hydroxy benzoate to 2-octaprenylphenol, an intermediate step in ubiquinone biosynthesis. This chain is 3-octaprenyl-4-hydroxybenzoate carboxy-lyase, found in Aeromonas salmonicida (strain A449).